The primary structure comprises 911 residues: SH3 and PX domain-containing protein 2B (911 aa).

Residues 5 to 129 (RSIVEVKVLD…QFFETRPEDL (125 aa)) form the PX domain. Tyrosine 25 is modified (phosphotyrosine). 2 consecutive SH3 domains span residues 152–211 (MVLE…GQDG) and 221–280 (EEEE…KNSG). Residues 275-366 (LKKNSGEPLP…GLNLPKPPIP (92 aa)) are disordered. Phosphoserine occurs at positions 279 and 291. Over residues 282 to 292 (PLPPKPGPGSP) the composition is skewed to pro residues. Residues 311–337 (GREKELLSSQRDGRFEGRPVPDGDAKQ) are compositionally biased toward basic and acidic residues. The segment covering 338 to 347 (RSPKMRQRPP) has biased composition (basic residues). One can recognise an SH3 3 domain in the interval 368-427 (QVEEEYYTIAEFQTTIPDGISFQAGLKVEVIEKNLSGWWYIQIEDKEGWAPATFIDKYKK). Residues 458–834 (NTGSEATGPS…GPWGTGKIGE (377 aa)) are disordered. Composition is skewed to basic and acidic residues over residues 486-499 (KDWK…RKAS), 517-548 (EEKP…RTEQ), 571-586 (PARD…DKSR), 598-609 (CGHKVLAKEVKK), and 618-628 (SKTDLPEEKPD). Phosphoserine occurs at positions 499 and 528. Composition is skewed to pro residues over residues 643 to 653 (RPKPAPSPKTE) and 756 to 766 (VVPPRRPPPPK). The segment covering 822 to 831 (GSLGPWGTGK) has biased composition (gly residues). A Phosphoserine modification is found at serine 843. An SH3 4 domain is found at 850 to 911 (LKDSLYVAVA…IPSNYLRKKP (62 aa)).

This sequence belongs to the SH3PXD2 family. Interacts with ADAM15. Interacts with NOXO1. Interacts (via SH3 domains) with NOXA1; the interaction is direct. Interacts with FASLG. Phosphorylated in SRC-transformed cells. Expressed in fibroblasts.

The protein localises to the cytoplasm. Its subcellular location is the cell projection. The protein resides in the podosome. In terms of biological role, adapter protein involved in invadopodia and podosome formation and extracellular matrix degradation. Binds matrix metalloproteinases (ADAMs), NADPH oxidases (NOXs) and phosphoinositides. Acts as an organizer protein that allows NOX1- or NOX3-dependent reactive oxygen species (ROS) generation and ROS localization. Plays a role in mitotic clonal expansion during the immediate early stage of adipocyte differentiation. The polypeptide is SH3 and PX domain-containing protein 2B (SH3PXD2B) (Homo sapiens (Human)).